The chain runs to 21 residues: Major outer membrane protein (21 aa).

As to quaternary structure, disulfide bond interactions within and between MOMP molecules and other components form high molecular-weight oligomers.

The protein localises to the cell outer membrane. Functionally, structural rigidity of the outer membrane of elementary bodies and porin forming, permitting diffusion of solutes through the intracellular reticulate body membrane. The protein is Major outer membrane protein of Actinobacillus equuli.